The sequence spans 1217 residues: Bud site selection protein 4 (1217 aa).

Positions 430 to 514 are disordered; that stretch reads EAELISNPER…PPMNGLSTMF (85 aa). Positions 437–468 are enriched in polar residues; sequence PERSGSPTNDNMSQHSQNRQLLGVSEVSQAQQ. Basic and acidic residues predominate over residues 470–500; it reads PEHHVEMSVEFQDEGRRDITSSFSRESDRIE. The region spanning 1086–1195 is the PH domain; that stretch reads RVNNEGFLWQ…WVEILTSVVE (110 aa).

Belongs to the BUD4 family.

The protein resides in the bud neck. In terms of biological role, required for selection of future bud sites. Cooperates with other bud site selection proteins to recognize a spatial landmark during mitosis and they subsequently become a landmark for downstream polarity establishment factors that coordinate budding and cytokinesis. Involved in the septin organization at the bud neck. The chain is Bud site selection protein 4 (BUD4) from Kluyveromyces lactis (strain ATCC 8585 / CBS 2359 / DSM 70799 / NBRC 1267 / NRRL Y-1140 / WM37) (Yeast).